Consider the following 57-residue polypeptide: uncharacterized protein (57 aa).

A helical transmembrane segment spans residues 34–54 (AALLDAAALVVIPGLLTVAAV).

The protein localises to the membrane. This is an uncharacterized protein from Dictyostelium discoideum (Social amoeba).